The primary structure comprises 102 residues: Small ribosomal subunit protein bS18c (102 aa).

The span at 1-19 (MDKTKRPLRKSKRSFRRRL) shows a compositional bias: basic residues. Positions 1 to 26 (MDKTKRPLRKSKRSFRRRLPPPIGSG) are disordered.

It belongs to the bacterial ribosomal protein bS18 family. As to quaternary structure, part of the 30S ribosomal subunit.

The protein resides in the plastid. Its subcellular location is the chloroplast. The polypeptide is Small ribosomal subunit protein bS18c (Piper cenocladum (Ant piper)).